The following is a 623-amino-acid chain: (-)-limonene synthase TPS1, chloroplastic (623 aa).

The transit peptide at Met1–Gln60 directs the protein to the chloroplast. Residues Thr29–Arg52 are disordered. Over residues Pro37–Ser51 the composition is skewed to basic residues. 5 residues coordinate (2E)-geranyl diphosphate: Arg337, Asp374, Asp378, Arg516, and Asp519. Mg(2+) contacts are provided by Asp374 and Asp378. A DDXXD motif motif is present at residues Asp374–Asp378. Asp519, Thr523, and Glu527 together coordinate Mg(2+).

Belongs to the terpene synthase family. Tpsb subfamily. Mg(2+) serves as cofactor. Requires Mn(2+) as cofactor. The cofactor is K(+). In terms of tissue distribution, trichome.

The protein resides in the plastid. Its subcellular location is the chloroplast. The enzyme catalyses (2E)-geranyl diphosphate = (4S)-limonene + diphosphate. The catalysed reaction is (2E)-geranyl diphosphate = terpinolene + diphosphate. It carries out the reaction (2E)-geranyl diphosphate = (1R,5R)-alpha-pinene + diphosphate. It catalyses the reaction (2E)-geranyl diphosphate = (1R,5R)-beta-pinene + diphosphate. The enzyme catalyses (2E)-geranyl diphosphate = beta-myrcene + diphosphate. The catalysed reaction is (2E)-geranyl diphosphate = (4R)-limonene + diphosphate. Its pathway is secondary metabolite biosynthesis; terpenoid biosynthesis. It participates in terpene metabolism; (4S)-limonene biosynthesis; (4S)-limonene from geranyl diphosphate: step 1/1. In terms of biological role, involved in monoterpene (C10) olefins biosynthesis, constituants of cannabinoids and terpenoids-rich resins. Catalyzes mainly the conversion of (2E)-geranyl diphosphate to (-)-limonene, and also produces minor products such as (+)-limonene, (+)-alpha-pinene, terpinolene, (+)-beta-pinene and beta-myrcene. This chain is (-)-limonene synthase TPS1, chloroplastic, found in Cannabis sativa (Hemp).